Reading from the N-terminus, the 318-residue chain is MIDLSPLVRRLAGTPLASWSQGLQAQLEAKLEKGHGDLDRWRGALQALPTLQPSEIDLVNGLRLDCDCDDATRAQMRQALMGLSPWRKGPFDLFGVHVDTEWHSDWKWSRVSPHLNLKGKRVLDVGCGNGYYQWRMLGAGADMVIGVDPNWLFFCQFQAVQQYLPELPAWHLPFALEDLPANLEGFDTVFSMGVFYHRRSPIEHLLALKDCLVKGGELVLETLVIEGDENQVLVPEDRYAQMRNVWYLPSVPALARWLRRAGFSDVRCVDVSVTSVEEQRSTEWMRYQSLGDFLDPNDHSKTLEGLPAPRRATLLARK.

Carboxy-S-adenosyl-L-methionine-binding positions include Lys88, Trp102, Lys107, Gly126, 176-177, Met192, Tyr196, and Arg311; that span reads LE.

It belongs to the class I-like SAM-binding methyltransferase superfamily. CmoB family. In terms of assembly, homotetramer.

The catalysed reaction is carboxy-S-adenosyl-L-methionine + 5-hydroxyuridine(34) in tRNA = 5-carboxymethoxyuridine(34) in tRNA + S-adenosyl-L-homocysteine + H(+). Functionally, catalyzes carboxymethyl transfer from carboxy-S-adenosyl-L-methionine (Cx-SAM) to 5-hydroxyuridine (ho5U) to form 5-carboxymethoxyuridine (cmo5U) at position 34 in tRNAs. This Pseudomonas putida (strain GB-1) protein is tRNA U34 carboxymethyltransferase.